Reading from the N-terminus, the 465-residue chain is Auxin transporter-like protein 3 (465 aa).

Topologically, residues 1–52 (MTSEKVETVVAGNYLEMEREEEGSKSTTGKLSKFFWHGGSVYDAWFSCASNQ) are cytoplasmic. The helical transmembrane segment at 53–70 (VAQVLLTLPYSFSQLGML) threads the bilayer. Residues 71–72 (SG) lie on the Extracellular side of the membrane. Residues 73–93 (ILFQIFYGLMGSWTAYIISVL) traverse the membrane as a helical segment. Over 94–129 (YVEYRTRKEREKVDFRNHVIQWFEVLDGLLGKHWRN) the chain is Cytoplasmic. Residues 130–150 (LGLFFNCTFLLFGSVIQLIAC) form a helical membrane-spanning segment. The Extracellular segment spans residues 151-165 (ASNIYYINDHLDKRT). The chain crosses the membrane as a helical span at residues 166-186 (WTYIFGACCATTVFIPSFHNY). The Cytoplasmic segment spans residues 187-189 (RIW). A helical transmembrane segment spans residues 190–210 (SFLGLVMTTYTAWYMTIASIL). Topologically, residues 211-225 (HGQAEDVKHSGPTKL) are extracellular. Residues 226–246 (VLYFTGATNILYTFGGHAVTV) traverse the membrane as a helical segment. At 247 to 259 (EIMHAMWKPQKFK) the chain is on the cytoplasmic side. A helical membrane pass occupies residues 260-280 (MIYLIATLYVMTLTLPSAAAV). Residues 281 to 307 (YWAFGDNLLTHSNALSLLPRTGFRDTA) lie on the Extracellular side of the membrane. The chain crosses the membrane as a helical span at residues 308 to 328 (VILMLIHQFITFGFACTPLYF). The Cytoplasmic segment spans residues 329 to 349 (VWEKFLGVHETKSLLKRALVR). The helical transmembrane segment at 350–370 (LPVVIPIWFLAIIFPFFGPIN) threads the bilayer. At 371–374 (STVG) the chain is on the extracellular side. The helical transmembrane segment at 375–395 (SLLVSFTVYIIPALAHMVTFA) threads the bilayer. The Cytoplasmic portion of the chain corresponds to 396–421 (SAPARENAVERPPSFLGGWVGLYSVN). A helical transmembrane segment spans residues 422–442 (VFVAVWVLVVGFGLGGWASML). The Extracellular segment spans residues 443–465 (NFVHQIKTFGLFAKCFQCPPHKA).

Belongs to the amino acid/polyamine transporter 2 family. Amino acid/auxin permease (AAAP) (TC 2.A.18.1) subfamily. Shoots and roots of nodulating plants. Low levels in roots, nodules, stems, petioles, leaves, shoot apices and flowers.

The protein resides in the cell membrane. Its function is as follows. Carrier protein involved in proton-driven auxin influx. Mediates the formation of auxin gradient from developing leaves (site of auxin biosynthesis) to tips by contributing to the loading of auxin in vascular tissues and facilitating acropetal (base to tip) auxin transport within inner tissues of the root apex, and basipetal (tip to base) auxin transport within outer tissues of the root apex. May be involved in lateral roots and nodules formation. The polypeptide is Auxin transporter-like protein 3 (LAX3) (Medicago truncatula (Barrel medic)).